Here is a 513-residue protein sequence, read N- to C-terminus: Glutamate--tRNA ligase 2 (513 aa).

A 'HIGH' region motif is present at residues 11-21 (PSPTGFLHIGS). A 'KMSKS' region motif is present at residues 240–244 (KLSKR). K243 is an ATP binding site.

Belongs to the class-I aminoacyl-tRNA synthetase family. Glutamate--tRNA ligase type 1 subfamily. Monomer.

It localises to the cytoplasm. It catalyses the reaction tRNA(Glu) + L-glutamate + ATP = L-glutamyl-tRNA(Glu) + AMP + diphosphate. Functionally, catalyzes the attachment of glutamate to tRNA(Glu) in a two-step reaction: glutamate is first activated by ATP to form Glu-AMP and then transferred to the acceptor end of tRNA(Glu). In Rickettsia rickettsii (strain Iowa), this protein is Glutamate--tRNA ligase 2.